The sequence spans 247 residues: Granulin (247 aa).

It belongs to the polyhedrin family.

Its function is as follows. Component of the virus occlusion bodies, which are large proteinaceous structures, that protect the virus from the outside environment for extended periods until they are ingested by insect larvae. This Pieris brassicae granulosis virus (PbGV) protein is Granulin.